A 130-amino-acid polypeptide reads, in one-letter code: Flagellar assembly factor FliW (130 aa).

This sequence belongs to the FliW family. As to quaternary structure, interacts with translational regulator CsrA and flagellin(s).

Its subcellular location is the cytoplasm. In terms of biological role, acts as an anti-CsrA protein, binds CsrA and prevents it from repressing translation of its target genes, one of which is flagellin. Binds to flagellin and participates in the assembly of the flagellum. In Clostridioides difficile (strain 630) (Peptoclostridium difficile), this protein is Flagellar assembly factor FliW.